The primary structure comprises 330 residues: Beta-ketoacyl-[acyl-carrier-protein] synthase III (330 aa).

Active-site residues include cysteine 115 and histidine 255. The ACP-binding stretch occupies residues 256–260; it reads QANVR. Asparagine 285 is an active-site residue.

This sequence belongs to the thiolase-like superfamily. FabH family. Homodimer.

It localises to the cytoplasm. The enzyme catalyses malonyl-[ACP] + acetyl-CoA + H(+) = 3-oxobutanoyl-[ACP] + CO2 + CoA. It participates in lipid metabolism; fatty acid biosynthesis. Functionally, catalyzes the condensation reaction of fatty acid synthesis by the addition to an acyl acceptor of two carbons from malonyl-ACP. Catalyzes the first condensation reaction which initiates fatty acid synthesis and may therefore play a role in governing the total rate of fatty acid production. Possesses both acetoacetyl-ACP synthase and acetyl transacylase activities. Its substrate specificity determines the biosynthesis of branched-chain and/or straight-chain of fatty acids. The chain is Beta-ketoacyl-[acyl-carrier-protein] synthase III from Symbiobacterium thermophilum (strain DSM 24528 / JCM 14929 / IAM 14863 / T).